The sequence spans 421 residues: MFTANMNIQDYDPILWQAIENENRRQEEHIELIASENYASPRVMQAQGSQFTNKYAEGYPGKRYYGGCEYADIVEQLAIDRAKQLFGADYVNVQPHSGSQANAAVYGALIQPNDTILGMDLAHGGHLTHGAKVSFSGKIYNSVLYGITAEGLIDYEDVRQKALECKPKMIVAGFSAYSQIVDWAKMREIADEVGAYLFVDMAHVAGLIAAGVYPSPLPYAHVVTTTTHKTLGGPRGGLILSACGDEEIYKKLQSSVFPANQGGPLVHIIAAKAVCFKEALEPEYKIYQQNVVKNAKAMVEVFKQRGYEVISNGTENHLFLVSFVKQGLTGKAADAALGQANITVNKNSVPNDPQKPFITSGIRIGTPAVTRRGFKEADVQALAGWMCDVLDSIGKDNHEQVIAETKAKVLDICARLPVYAK.

(6S)-5,6,7,8-tetrahydrofolate-binding positions include leucine 121 and 125-127 (GHL). An N6-(pyridoxal phosphate)lysine modification is found at lysine 229.

Belongs to the SHMT family. Homodimer. Requires pyridoxal 5'-phosphate as cofactor.

It is found in the cytoplasm. The catalysed reaction is (6R)-5,10-methylene-5,6,7,8-tetrahydrofolate + glycine + H2O = (6S)-5,6,7,8-tetrahydrofolate + L-serine. It participates in one-carbon metabolism; tetrahydrofolate interconversion. It functions in the pathway amino-acid biosynthesis; glycine biosynthesis; glycine from L-serine: step 1/1. Its function is as follows. Catalyzes the reversible interconversion of serine and glycine with tetrahydrofolate (THF) serving as the one-carbon carrier. This reaction serves as the major source of one-carbon groups required for the biosynthesis of purines, thymidylate, methionine, and other important biomolecules. Also exhibits THF-independent aldolase activity toward beta-hydroxyamino acids, producing glycine and aldehydes, via a retro-aldol mechanism. The polypeptide is Serine hydroxymethyltransferase (Actinobacillus pleuropneumoniae serotype 7 (strain AP76)).